A 405-amino-acid chain; its full sequence is Palmitoyltransferase PFA5 (405 aa).

Transmembrane regions (helical) follow at residues 12-32, 51-71, 154-174, 191-211, and 310-330; these read YIKL…NYAI, IILW…WVLI, LFFM…LIYC, FIVL…LFGI, and FYTL…FIDI. The 51-residue stretch at 111 to 161 folds into the DHHC domain; the sequence is YYCSNSNSIKLERSFFSKDVGYNVIKFDHYCIWIGQPIGQDNYLFFMKFMM.

Belongs to the DHHC palmitoyltransferase family. PFA5 subfamily. Post-translationally, autopalmitoylated.

The protein resides in the membrane. It catalyses the reaction L-cysteinyl-[protein] + hexadecanoyl-CoA = S-hexadecanoyl-L-cysteinyl-[protein] + CoA. The protein is Palmitoyltransferase PFA5 (PFA5) of Candida albicans (strain SC5314 / ATCC MYA-2876) (Yeast).